Here is a 122-residue protein sequence, read N- to C-terminus: Riboflavin kinase (122 aa).

CDP is bound at residue 4–9 (GFGEGA). Positions 33 and 35 each coordinate Mg(2+). 2 residues coordinate FMN: threonine 84 and glutamate 92. Residue 97-100 (VNLR) participates in CDP binding.

It belongs to the archaeal riboflavin kinase family. Requires Mg(2+) as cofactor.

It catalyses the reaction riboflavin + CTP = CDP + FMN + H(+). The protein operates within cofactor biosynthesis; FMN biosynthesis; FMN from riboflavin (CTP route): step 1/1. Functionally, catalyzes the CTP-dependent phosphorylation of riboflavin (vitamin B2) to form flavin mononucleotide (FMN). The polypeptide is Riboflavin kinase (Methanothermobacter thermautotrophicus (strain ATCC 29096 / DSM 1053 / JCM 10044 / NBRC 100330 / Delta H) (Methanobacterium thermoautotrophicum)).